The sequence spans 84 residues: Large ribosomal subunit protein bL27 (84 aa).

It belongs to the bacterial ribosomal protein bL27 family.

The sequence is that of Large ribosomal subunit protein bL27 from Kocuria rhizophila (strain ATCC 9341 / DSM 348 / NBRC 103217 / DC2201).